The sequence spans 254 residues: Photosystem II 22 kDa protein 2, chloroplastic (254 aa).

The N-terminal 38 residues, methionine 1–valine 38, are a transit peptide targeting the chloroplast. 2 tandem repeats follow at residues phenylalanine 42–aspartate 148 and alanine 149–aspartate 253. 4 helical membrane passes run valine 86–leucine 106, alanine 120–glycine 140, leucine 184–threonine 204, and proline 219–isoleucine 239.

Belongs to the ELIP/psbS family.

It is found in the plastid. The protein resides in the chloroplast thylakoid membrane. In terms of biological role, involved in high light-mediated energy-dependent nonphotochemical quenching (NPQ, qE) and thermal dissipation (TD) thus regulating energy conversion in photosystem II and protecting from photoinhibition. Also seems to regulate quantum yield of electron transport in fluctuating light conditions. The sequence is that of Photosystem II 22 kDa protein 2, chloroplastic from Oryza sativa subsp. japonica (Rice).